Consider the following 417-residue polypeptide: Phosphoglycerate kinase (417 aa).

The (2R)-3-phosphoglycerate site is built by Val-23, Asp-24, Phe-25, Asn-26, Gln-38, Arg-39, Ser-62, His-63, Gly-65, Arg-66, Leu-121, Arg-122, His-169, and Arg-170. Gly-213 provides a ligand contact to ADP. Gly-213 serves as a coordination point for CDP. The AMP site is built by Ala-214 and Lys-215. Ala-214 contributes to the ATP binding site. Mg(2+) is bound at residue Ala-214. Position 218 (Asp-218) interacts with CDP. Residue Asp-218 coordinates Mg(2+). Lys-219 contributes to the AMP binding site. Lys-219 provides a ligand contact to ATP. Gly-237 is an ADP binding site. Gly-237 is a binding site for CDP. AMP-binding residues include Gly-238 and Gly-312. ATP-binding residues include Gly-238 and Gly-312. CDP contacts are provided by Gly-337 and Phe-342. An ADP-binding site is contributed by Phe-342. Residue Glu-343 coordinates AMP. Glu-343, Asp-374, and Thr-375 together coordinate ATP. Asp-374 is a binding site for Mg(2+).

The protein belongs to the phosphoglycerate kinase family. In terms of assembly, monomer. Mg(2+) serves as cofactor.

Its subcellular location is the cytoplasm. The protein localises to the secreted. It localises to the cell wall. The protein resides in the mitochondrion. It catalyses the reaction (2R)-3-phosphoglycerate + ATP = (2R)-3-phospho-glyceroyl phosphate + ADP. It functions in the pathway carbohydrate degradation; glycolysis; pyruvate from D-glyceraldehyde 3-phosphate: step 2/5. Its function is as follows. Catalyzes one of the two ATP producing reactions in the glycolytic pathway via the reversible conversion of 1,3-diphosphoglycerate to 3-phosphoglycerate. Both L- and D- forms of purine and pyrimidine nucleotides can be used as substrates, but the activity is much lower on pyrimidines. Negatively regulates the biosynthesis of acetyl-CoA from pyruvate in the mitochondrion. This Candida albicans (strain SC5314 / ATCC MYA-2876) (Yeast) protein is Phosphoglycerate kinase (PGK1).